A 44-amino-acid chain; its full sequence is DNA-directed RNA polymerase subunit Rpo12 (44 aa).

3 residues coordinate Zn(2+): C8, C22, and C25.

It belongs to the archaeal Rpo12/eukaryotic RPC10 RNA polymerase subunit family. Part of the RNA polymerase complex. It depends on Zn(2+) as a cofactor.

The protein resides in the cytoplasm. The enzyme catalyses RNA(n) + a ribonucleoside 5'-triphosphate = RNA(n+1) + diphosphate. Its function is as follows. DNA-dependent RNA polymerase (RNAP) catalyzes the transcription of DNA into RNA using the four ribonucleoside triphosphates as substrates. This is DNA-directed RNA polymerase subunit Rpo12 from Haloquadratum walsbyi (strain DSM 16790 / HBSQ001).